The chain runs to 502 residues: Mannitol 2-dehydrogenase (502 aa).

35–46 (IVHVGVGGFHRA) contacts NAD(+).

This sequence belongs to the mannitol dehydrogenase family. Monomer.

The catalysed reaction is D-mannitol + NAD(+) = D-fructose + NADH + H(+). Catalyzes the NAD(H)-dependent interconversion of D-fructose and D-mannitol in the mannitol metabolic pathway. The chain is Mannitol 2-dehydrogenase from Pyricularia oryzae (strain 70-15 / ATCC MYA-4617 / FGSC 8958) (Rice blast fungus).